Reading from the N-terminus, the 478-residue chain is 2-(3-amino-3-carboxypropyl)histidine synthase subunit 2 (478 aa).

Positions 93, 114, and 331 each coordinate [4Fe-4S] cluster.

It belongs to the DPH1/DPH2 family. DPH2 subfamily. In terms of assembly, component of the 2-(3-amino-3-carboxypropyl)histidine synthase complex composed of dph1, dph2, dph3 and a NADH-dependent reductase. The cofactor is [4Fe-4S] cluster.

It participates in protein modification; peptidyl-diphthamide biosynthesis. Its function is as follows. Required for the first step of diphthamide biosynthesis, a post-translational modification of histidine which occurs in elongation factor 2. Dph1 and dph2 transfer a 3-amino-3-carboxypropyl (ACP) group from S-adenosyl-L-methionine (SAM) to a histidine residue, the reaction is assisted by a reduction system comprising dph3 and a NADH-dependent reductase. Facilitates the reduction of the catalytic iron-sulfur cluster found in the dph1 subunit. This is 2-(3-amino-3-carboxypropyl)histidine synthase subunit 2 (dph2) from Xenopus laevis (African clawed frog).